The sequence spans 686 residues: XK-related protein 5 (686 aa).

The next 5 membrane-spanning stretches (helical) occupy residues 33 to 53, 205 to 225, 239 to 259, 265 to 285, and 297 to 317; these read LLWG…QALS, HFWV…WLVA, LFNL…WDSP, VTFY…ATDF, and IAGV…YYSL. Disordered stretches follow at residues 339-387, 448-468, and 490-592; these read GDKT…PPEA, ALSA…LENS, and FASD…APFP. Basic and acidic residues predominate over residues 340–359; sequence DKTERRDSPRATDLAGKRTE. Composition is skewed to polar residues over residues 450-468 and 490-509; these read SAQQ…LENS and FASD…TQGE. A compositionally biased stretch (gly residues) spans 523 to 536; it reads QGKGTGGQQRGGEG. Polar residues predominate over residues 550–567; that stretch reads VATSSQQEGSPATLQTAH.

It belongs to the XK family.

The protein resides in the cell membrane. This chain is XK-related protein 5, found in Homo sapiens (Human).